Here is a 431-residue protein sequence, read N- to C-terminus: Isochorismate synthase MenF (431 aa).

Lysine 190 serves as the catalytic Proton acceptor. Glutamate 240 functions as the Proton donor in the catalytic mechanism. Positions 284 and 416 each coordinate Mg(2+).

The protein belongs to the isochorismate synthase family. In terms of assembly, homodimer. It depends on Mg(2+) as a cofactor.

The enzyme catalyses chorismate = isochorismate. The protein operates within quinol/quinone metabolism; 1,4-dihydroxy-2-naphthoate biosynthesis; 1,4-dihydroxy-2-naphthoate from chorismate: step 1/7. It participates in quinol/quinone metabolism; menaquinone biosynthesis. Functionally, catalyzes the conversion of chorismate to isochorismate. Can also catalyze the reverse reaction, but with a lower efficiency. The chain is Isochorismate synthase MenF from Escherichia coli (strain K12).